A 522-amino-acid polypeptide reads, in one-letter code: RRSGNYQPTMWDFEYIQSIHNDYAGDKYMKRFNELKEEMKKMIMAEGSQELEKLELIDNLQRLGVSYHFKHEIMQILSSIKQHSTPADSLYATALKFRLLREHGFHISQEIFDGLSETHTKDTKGMLYLYEASFLATEGESELEQAWTEKHLREYLKNKNIDQNVAKLVHRALELPLHWRMLRLEARWFISFYKKRQDMIPLLLELAILDFNIVQAAHIQDLKYVARWWKETGLAENLPFARDRLVENFFWTIGVNFLPQYGYSRRIETKVNALVTAIDDVYDVFGTLDELQCFTDAIQRWNTDELDNLPDNMKMCYFALDDFINEVACDALIVPYLRNAWTDLCKSYLIEAKWYFSKYIPTMEEYMDNAWISISAPVILVHAYFLIANPVNKEALHYLRNYHDIIRWSALILRLANDLGTSSDELKRGDVPKSIQCYMNEKKVSEEEARQHIRLLISETWKKLNEAHNVAAHPFPKMFVKSAMNLARMAQCMYQHGDGHGGQNSETQNRIMALLFESIPPA.

Residues Arg242, Asp279, Asp283, Arg414, and Asn417 each contribute to the (2E)-geranyl diphosphate site. The Mg(2+) site is built by Asp279 and Asp283. The DDXXD motif motif lies at 279–283 (DDVYD). 3 residues coordinate Mg(2+): Asn417, Thr421, and Glu425.

It belongs to the terpene synthase family. Tpsb subfamily. Monomer. Mg(2+) is required as a cofactor. It depends on Mn(2+) as a cofactor. As to expression, confined to flowers.

It localises to the plastid. It is found in the chloroplast. It carries out the reaction (2E)-geranyl diphosphate + H2O = (S)-alpha-terpineol + diphosphate. It catalyses the reaction (2E)-geranyl diphosphate = sabinene + diphosphate. The catalysed reaction is (2E)-geranyl diphosphate = beta-myrcene + diphosphate. The enzyme catalyses (2E)-geranyl diphosphate = limonene + diphosphate. It carries out the reaction (2E)-geranyl diphosphate + H2O = 1,8-cineole + diphosphate. It catalyses the reaction (2E)-geranyl diphosphate = alpha-pinene + diphosphate. It participates in secondary metabolite biosynthesis; terpenoid biosynthesis. In terms of biological role, monoterpene synthase (TPS) involved in the biosynthesis of monoterpene natural products of the 'cineole cassette', volatile compounds present in floral scent. Catalyzes the conversion of (2E)-geranyl diphosphate (GPP) into alpha-terpineol and, as minor products, sabinene, beta-myrcene, limonene, alpha-pinene and 1,8-cineole. This chain is Terpineol synthase, chloroplastic, found in Nicotiana langsdorffii (Langsdorff's tobacco).